We begin with the raw amino-acid sequence, 333 residues long: Putative F-box protein At4g11580 (333 aa).

In terms of domain architecture, F-box spans 11–58 (VSEWADLNKDILELIFNKLDVMDITMGASRVCISWFLASHNKTLWNTV).

The polypeptide is Putative F-box protein At4g11580 (Arabidopsis thaliana (Mouse-ear cress)).